Consider the following 258-residue polypeptide: Synaptosomal-associated protein 29 (258 aa).

A disordered region spans residues Met-1–Arg-41. Residues Glu-18–Pro-32 are compositionally biased toward basic and acidic residues. The stretch at Ala-76 to Lys-107 forms a coiled coil. Phosphoserine is present on residues Ser-77, Ser-78, and Ser-114. The disordered stretch occupies residues Pro-127 to Pro-190. 2 positions are modified to phosphothreonine: Thr-130 and Thr-137. Positions Pro-132–Ser-144 are enriched in polar residues. Residues Ser-163, Ser-182, Ser-185, Ser-204, and Ser-210 each carry the phosphoserine modification. In terms of domain architecture, t-SNARE coiled-coil homology spans Gln-196–Leu-258.

This sequence belongs to the SNAP-25 family. Forms a SNARE complex, composed of VAMP8, SNAP29 and STX17, involved in fusion of autophagosome with lysosome. Interacts with multiple syntaxins including STX6. Interacts with EIPR1. Interacts with STX17; this interaction is increased in the absence of TMEM39A.

The protein resides in the cytoplasm. Its subcellular location is the golgi apparatus membrane. The protein localises to the cytoplasmic vesicle. It localises to the autophagosome membrane. It is found in the cell projection. The protein resides in the cilium membrane. Functionally, SNAREs, soluble N-ethylmaleimide-sensitive factor-attachment protein receptors, are essential proteins for fusion of cellular membranes. SNAREs localized on opposing membranes assemble to form a trans-SNARE complex, an extended, parallel four alpha-helical bundle that drives membrane fusion. SNAP29 is a SNARE involved in autophagy through the direct control of autophagosome membrane fusion with the lysososome membrane. Also plays a role in ciliogenesis by regulating membrane fusions. The polypeptide is Synaptosomal-associated protein 29 (Pongo abelii (Sumatran orangutan)).